Consider the following 174-residue polypeptide: Alkyl hydroperoxide reductase AhpD (174 aa).

The active-site Proton donor is the C130. The cysteines at positions 130 and 133 are disulfide-linked. Catalysis depends on C133, which acts as the Cysteine sulfenic acid (-SOH) intermediate.

This sequence belongs to the AhpD family. As to quaternary structure, homotrimer.

The enzyme catalyses N(6)-[(R)-dihydrolipoyl]-L-lysyl-[lipoyl-carrier protein] + a hydroperoxide = N(6)-[(R)-lipoyl]-L-lysyl-[lipoyl-carrier protein] + an alcohol + H2O. In terms of biological role, antioxidant protein with alkyl hydroperoxidase activity. Required for the reduction of the AhpC active site cysteine residues and for the regeneration of the AhpC enzyme activity. This Corynebacterium kroppenstedtii (strain DSM 44385 / JCM 11950 / CIP 105744 / CCUG 35717) protein is Alkyl hydroperoxide reductase AhpD.